The following is a 423-amino-acid chain: Glutamyl-tRNA reductase (423 aa).

Residues 49–52 (TCNR), serine 111, 116–118 (EPQ), and glutamine 122 each bind substrate. The Nucleophile role is filled by cysteine 50. 191-196 (GAGEMS) contacts NADP(+).

It belongs to the glutamyl-tRNA reductase family. Homodimer.

It carries out the reaction (S)-4-amino-5-oxopentanoate + tRNA(Glu) + NADP(+) = L-glutamyl-tRNA(Glu) + NADPH + H(+). It participates in porphyrin-containing compound metabolism; protoporphyrin-IX biosynthesis; 5-aminolevulinate from L-glutamyl-tRNA(Glu): step 1/2. Its function is as follows. Catalyzes the NADPH-dependent reduction of glutamyl-tRNA(Glu) to glutamate 1-semialdehyde (GSA). The protein is Glutamyl-tRNA reductase of Syntrophus aciditrophicus (strain SB).